The following is a 291-amino-acid chain: Nucleotide-binding protein CMM_1747 (291 aa).

An ATP-binding site is contributed by 15–22; the sequence is GMSGAGRS. Residue 66 to 69 coordinates GTP; that stretch reads DVRG.

It belongs to the RapZ-like family.

Displays ATPase and GTPase activities. This chain is Nucleotide-binding protein CMM_1747, found in Clavibacter michiganensis subsp. michiganensis (strain NCPPB 382).